Here is a 328-residue protein sequence, read N- to C-terminus: 5,10-methylenetetrahydromethanopterin reductase (328 aa).

The protein belongs to the mer family.

Its subcellular location is the cytoplasm. The enzyme catalyses 5-methyl-5,6,7,8-tetrahydromethanopterin + oxidized coenzyme F420-(gamma-L-Glu)(n) + H(+) = 5,10-methylenetetrahydromethanopterin + reduced coenzyme F420-(gamma-L-Glu)(n). Its pathway is one-carbon metabolism; methanogenesis from CO(2); methyl-coenzyme M from 5,10-methylene-5,6,7,8-tetrahydromethanopterin: step 1/2. Functionally, catalyzes the reversible reduction of methylene-H(4)MPT to methyl-H(4)MPT. The protein is 5,10-methylenetetrahydromethanopterin reductase of Methanosarcina barkeri (strain Fusaro / DSM 804).